The chain runs to 270 residues: Phospholysine phosphohistidine inorganic pyrophosphate phosphatase (270 aa).

Aspartate 17 and serine 19 together coordinate Mg(2+). Substrate is bound by residues 17 to 19 (DIS), 54 to 55 (TN), and lysine 189. Aspartate 214 lines the Mg(2+) pocket.

It belongs to the HAD-like hydrolase superfamily. In terms of assembly, homodimer. It depends on Mg(2+) as a cofactor. Detected in liver (at protein level).

It localises to the cytoplasm. It is found in the nucleus. The catalysed reaction is diphosphate + H2O = 2 phosphate + H(+). In terms of biological role, phosphatase that hydrolyzes imidodiphosphate, 3-phosphohistidine and 6-phospholysine. Has broad substrate specificity and can also hydrolyze inorganic diphosphate, but with lower efficiency. This is Phospholysine phosphohistidine inorganic pyrophosphate phosphatase (LHPP) from Bos taurus (Bovine).